A 454-amino-acid chain; its full sequence is UPF0210 protein BAD_1323 (454 aa).

Belongs to the UPF0210 family. Homodimer.

The polypeptide is UPF0210 protein BAD_1323 (Bifidobacterium adolescentis (strain ATCC 15703 / DSM 20083 / NCTC 11814 / E194a)).